Consider the following 548-residue polypeptide: Membrane protein insertase YidC (548 aa).

The helical transmembrane segment at 6-26 (NLLIIALLFVSFMIWQAWEQD) threads the bilayer. The interval 28-52 (NPQPQQQTTQTTTTAAGSAADQGVP) is disordered. Residues 29–41 (PQPQQQTTQTTTT) show a composition bias toward low complexity. A run of 4 helical transmembrane segments spans residues 345–365 (KFIH…TFIV), 420–440 (LGGC…YYML), 458–478 (LSAQ…MFFI), and 499–519 (PVIF…YYIV).

The protein belongs to the OXA1/ALB3/YidC family. Type 1 subfamily. In terms of assembly, interacts with the Sec translocase complex via SecD. Specifically interacts with transmembrane segments of nascent integral membrane proteins during membrane integration.

It is found in the cell inner membrane. Its function is as follows. Required for the insertion and/or proper folding and/or complex formation of integral membrane proteins into the membrane. Involved in integration of membrane proteins that insert both dependently and independently of the Sec translocase complex, as well as at least some lipoproteins. Aids folding of multispanning membrane proteins. This chain is Membrane protein insertase YidC, found in Klebsiella pneumoniae (strain 342).